We begin with the raw amino-acid sequence, 902 residues long: Protein translocase subunit SecA (902 aa).

ATP contacts are provided by residues glutamine 87, 105-109 (GEGKT), and aspartate 512. The interval 847–902 (DAERLARQQQLSHLDDQSAAAQEMASQTGDRKIGRNDPCPCGSGKKYKQCHGRLNA) is disordered. Residues cysteine 885, cysteine 887, cysteine 896, and histidine 897 each contribute to the Zn(2+) site. Basic residues predominate over residues 891–902 (KKYKQCHGRLNA).

This sequence belongs to the SecA family. In terms of assembly, monomer and homodimer. Part of the essential Sec protein translocation apparatus which comprises SecA, SecYEG and auxiliary proteins SecDF-YajC and YidC. Zn(2+) is required as a cofactor.

It localises to the cell inner membrane. Its subcellular location is the cytoplasm. It carries out the reaction ATP + H2O + cellular proteinSide 1 = ADP + phosphate + cellular proteinSide 2.. Part of the Sec protein translocase complex. Interacts with the SecYEG preprotein conducting channel. Has a central role in coupling the hydrolysis of ATP to the transfer of proteins into and across the cell membrane, serving both as a receptor for the preprotein-SecB complex and as an ATP-driven molecular motor driving the stepwise translocation of polypeptide chains across the membrane. The sequence is that of Protein translocase subunit SecA from Edwardsiella ictaluri (strain 93-146).